The sequence spans 1203 residues: MAGHDVQYGKHRTRRSFSRIKEVLDLPNLIEIQTDSFKAFLDHGLKEVFEDVLPISNFTDTMELEFVGYEIKEPKYTLEEARIHDASYSAPIFVTFRLINKETGEIKTQEVFFGDFPIMTEMGTFIINGGERIIVSQLVRSPGVYFNDKVDKNGKVGYGSTVIPNRGAWLELESDSKDITYTRIDRTRKIPFTTLVRALGFSGDDEIFDIFGDSELVRNTVEKDIHKNPMDSRTDEALKEIYERLRPGEPKTAESSRSLLVARFFDPRRYDLAAVGRYKINKKLNVKTRLLNQTIAEPLVDPETGEILVEAGTIMTRSVIESIESHLDGDLNKIVYIPNDAAVVTEPVVLQKFKVIAPTDPDRVVTIIGNANPDDKVRTVTPADILAEMSYFLNLAEGLGRVDDIDHLGNRRIRAVGELLANQVRLGLSRMERNVRERMSVQDNEVLTPQQIINIRPVTAAVKEFFGSSQLSQFMDQHNPLSELSHKRRLSALGPGGLTRDRAGYEVRDVHYTHYGRMCPIETPEGPNIGLINNLSSYGHLNKYGFVQTPYRKVDRETGVVTNEIVWLTADEEDEYTVAQANSRLNEDGTFAEKIVMGRHQGVNQEYPANIVDYMDVSPKQVVAVATACIPFLENDDSNRALMGANMQRQAVPLINPQAPYVGTGMEYQAAHDSGAAVIAQYDGKVTYADADKVEVRREDGSLDVYHIQKFRRSNSGTAYNQRTLVKVGDVVEKGDFIADGPSMENGEMALGQNPIVAYMTWEGYNFEDAVIMSERLVKDDVYTSVHLEEYESETRDTKLGPEEITREIPNVGEDALKDLDEMGIIRIGAEVKEGDILVGKVTPKGEKDLSAEERLLHAIFGDKSREVRDTSLRVPHGADGVVRDVKIFTRVNGDELQSGVNMLVRVYIAQKRKIKVGDKMAGRHGNKGVVSRIVPVEDMPYLPDGTPVDIMLNPLGVPSRMNIGQVMELHLGMAARTLGIHIATPVFDGASSEDLWSTVKEAGMDSDAKTILYDGRTGEPFDNRVSVGVMYMIKLHHMVDDKLHARSVGPYSTVTQQPLGGKAQFGGQRFGEMEVWALEAYGASNVLQEILTYKSDDINGRLKAYEAITKGKPIPKPGVPESFRVLVKELQSLGLDMRVLDEDDQEVELRDLDEGMDEDVIHVDDLEKAREKAAQEAKAAFEAEEAEKATKAEATEEAAEQE.

Residues 1174 to 1195 (AAQEAKAAFEAEEAEKATKAEA) are compositionally biased toward basic and acidic residues. Residues 1174 to 1203 (AAQEAKAAFEAEEAEKATKAEATEEAAEQE) are disordered.

Belongs to the RNA polymerase beta chain family. In terms of assembly, the RNAP catalytic core consists of 2 alpha, 1 beta, 1 beta' and 1 omega subunit. When a sigma factor is associated with the core the holoenzyme is formed, which can initiate transcription.

The catalysed reaction is RNA(n) + a ribonucleoside 5'-triphosphate = RNA(n+1) + diphosphate. Functionally, DNA-dependent RNA polymerase catalyzes the transcription of DNA into RNA using the four ribonucleoside triphosphates as substrates. The polypeptide is DNA-directed RNA polymerase subunit beta (Streptococcus pneumoniae (strain ATCC 700669 / Spain 23F-1)).